The following is a 167-amino-acid chain: Phospholipase A2 inhibitor alpha-like protein (167 aa).

A signal peptide spans 1 to 19; the sequence is MQLILLSSLLLLGLSLANG. The region spanning 62-163 is the C-type lectin domain; the sequence is GSERLYVTNK…CDEDLLVVCE (102 aa). 2 disulfides stabilise this stretch: C83–C162 and C140–C154.

Belongs to the alpha-type phospholipase A2 inhibitor family. In terms of assembly, homotrimer.

It is found in the secreted. Has no PLA2 inhibitory activity. The protein is Phospholipase A2 inhibitor alpha-like protein of Elaphe climacophora (Japanese rat snake).